The following is a 995-amino-acid chain: UPF0182 protein MUL_2505 (995 aa).

7 consecutive transmembrane segments (helical) span residues 18–38 (VLILIALGVIALLLAGPRLID), 63–83 (FLVFLVAGVLVGGIVFAGLAL), 113–133 (LFGIGIPAAIGLLAGIVAQSY), 175–195 (FVAIFLAFVANVVSHYLFGGI), 210–230 (IQLVSLVGVLVLLKTVAYWLN), 259–279 (KLILMAIAVICAAAVFSAIVL), and 287–307 (IGLVLLLLSSLIVGAAWPMIV). The tract at residues 900-947 (AATGIQPTEGGAPANVPPNNAPSPEALPGTPPSPPTAVPPAPEASVTL) is disordered. Over residues 928 to 941 (GTPPSPPTAVPPAP) the composition is skewed to pro residues.

The protein belongs to the UPF0182 family.

It localises to the cell membrane. This Mycobacterium ulcerans (strain Agy99) protein is UPF0182 protein MUL_2505.